We begin with the raw amino-acid sequence, 215 residues long: 3,4-dihydroxy-2-butanone 4-phosphate synthase (215 aa).

Residues 37-38 (RE), Asp42, 150-154 (RPGHT), and Glu174 each bind D-ribulose 5-phosphate. Glu38 contributes to the Mg(2+) binding site. His153 serves as a coordination point for Mg(2+).

It belongs to the DHBP synthase family. In terms of assembly, homodimer. Mg(2+) is required as a cofactor. It depends on Mn(2+) as a cofactor.

It carries out the reaction D-ribulose 5-phosphate = (2S)-2-hydroxy-3-oxobutyl phosphate + formate + H(+). Its pathway is cofactor biosynthesis; riboflavin biosynthesis; 2-hydroxy-3-oxobutyl phosphate from D-ribulose 5-phosphate: step 1/1. Its function is as follows. Catalyzes the conversion of D-ribulose 5-phosphate to formate and 3,4-dihydroxy-2-butanone 4-phosphate. This is 3,4-dihydroxy-2-butanone 4-phosphate synthase from Buchnera aphidicola subsp. Acyrthosiphon pisum (strain 5A).